We begin with the raw amino-acid sequence, 380 residues long: O-antigen polymerase (380 aa).

The next 12 helical transmembrane spans lie at 1 to 21 (MTYF…RLTP), 27 to 47 (NIVL…TFNE), 55 to 75 (ATTL…YILI), 94 to 114 (YIYW…IILL), 132 to 152 (SISG…MYLA), 169 to 189 (FLLA…VYIV), 201 to 221 (LIYG…LGKF), 229 to 249 (IISA…AAFN), 282 to 302 (ILPW…FAPW), 306 to 326 (LGLY…GIWF), 332 to 352 (LAVG…FFQE), and 353 to 373 (HYLL…LLAM).

It localises to the cell inner membrane. The enzyme catalyses n lipid-linked O-antigen repeat units = a lipid-linked O antigen + (n-1) polyisoprenyl diphosphate.. Its pathway is bacterial outer membrane biogenesis; LPS O-antigen biosynthesis. In terms of biological role, polymerase involved in the biosynthesis of the lipopolysaccharide (LPS). Catalyzes the polymerization of the O-antigen repeat units on the periplasmic face of the inner membrane, leading to the formation of the lipid-linked O-antigen molecule. In Shigella dysenteriae, this protein is O-antigen polymerase.